The chain runs to 406 residues: Calreticulin (406 aa).

An N-terminal signal peptide occupies residues 1 to 17 (MMWCKTVIVLLATVGFI). Cys-105 and Cys-137 are disulfide-bonded. An alpha-D-glucoside contacts are provided by Tyr-109, Lys-111, Tyr-128, and Asp-135. A run of 7 repeats spans residues 191–202 (VESGNLEDDWDF), 210–221 (DPTATKPEDWDD), 227–238 (DPDDKKPEDWDK), 244–255 (DPDATKPEDWDD), 259–269 (GEWEPPMIDNP), 273–283 (GEWQPKQLDNP), and 287–297 (GAWEHPEIANP). The 4 X approximate repeats stretch occupies residues 191–255 (VESGNLEDDW…DATKPEDWDD (65 aa)). The span at 207–251 (KIKDPTATKPEDWDDRATIPDPDDKKPEDWDKPEHIPDPDATKPE) shows a compositional bias: basic and acidic residues. The interval 207–259 (KIKDPTATKPEDWDDRATIPDPDDKKPEDWDKPEHIPDPDATKPEDWDDEMDG) is disordered. The interval 259-297 (GEWEPPMIDNPEFKGEWQPKQLDNPNYKGAWEHPEIANP) is 3 X approximate repeats. An an alpha-D-glucoside-binding site is contributed by Asp-317. The tract at residues 347–406 (KNTQAGEKKMKEAQDEVQRKKDEEEAKKASDKDDEDEDDDDEEKDDESKQDKDQSEHDEL) is disordered. Basic and acidic residues predominate over residues 352–377 (GEKKMKEAQDEVQRKKDEEEAKKASD). Acidic residues predominate over residues 378–391 (KDDEDEDDDDEEKD). Positions 392–406 (DESKQDKDQSEHDEL) are enriched in basic and acidic residues.

It belongs to the calreticulin family.

The protein localises to the endoplasmic reticulum lumen. Molecular calcium-binding chaperone promoting folding, oligomeric assembly and quality control in the ER via the calreticulin/calnexin cycle. This lectin may interact transiently with almost all of the monoglucosylated glycoproteins that are synthesized in the ER. The chain is Calreticulin from Drosophila melanogaster (Fruit fly).